The primary structure comprises 598 residues: Kinesin-like protein klp-3 (598 aa).

2 coiled-coil regions span residues 19–66 and 89–118; these read EVEL…FIQG and GNLSEENLRLKNALSQMQKVARVNELLETD. Residues 133–155 form a disordered region; sequence ALSRDSSCSVPRSVSPQPTGDVI. Positions 136-150 are enriched in polar residues; sequence RDSSCSVPRSVSPQP. Residues 170 to 248 adopt a coiled-coil conformation; it reads HWKKLQRCAE…LVELNGNIRV (79 aa). One can recognise a Kinesin motor domain in the interval 245 to 565; that stretch reads NIRVFYRIRP…VNFAEKIGQV (321 aa). Residue 328-335 participates in ATP binding; that stretch reads GHTGSGKT. A disordered region spans residues 569 to 598; the sequence is SGTMKREPTRRSMTGISSGQRREIPASPRK.

The protein belongs to the TRAFAC class myosin-kinesin ATPase superfamily. Kinesin family.

The protein resides in the cytoplasm. It localises to the cytoskeleton. The sequence is that of Kinesin-like protein klp-3 (klp-3) from Caenorhabditis elegans.